Reading from the N-terminus, the 225-residue chain is MSLTERIGQTPKAYELANERGPFSVEVYLNPGTSNTYQYVATTRNKFNNTDYDDLPWNYTSGKKVVTATGVVSGGERYVFLLRSEIAQDIQVTMYNTNGGSNPLNNSNVTRSNVDSSSYYQQPPQVVYNNGDLYGSRTGYSGAELGASIDKGIASLWGYLKQPLVMVGIAAVVGYLIYRYYYMSRPIGFGSSGAYDVPLLDTPLLRDSYRLPQSFTRDPLFRNSV.

4 N-linked (GlcNAc...) asparagine; by host glycosylation sites follow: Asn-48, Asn-58, Asn-105, and Asn-108. The helical transmembrane segment at 156–178 threads the bilayer; the sequence is LWGYLKQPLVMVGIAAVVGYLIY.

This sequence belongs to the ascovirus HvAv ORF58 family.

The protein localises to the membrane. This is an uncharacterized protein from Heliothis virescens ascovirus 3e (HvAV-3e).